We begin with the raw amino-acid sequence, 228 residues long: Cytidylate kinase (228 aa).

17 to 25 (GPTASGKGT) serves as a coordination point for ATP.

This sequence belongs to the cytidylate kinase family. Type 1 subfamily.

The protein localises to the cytoplasm. It carries out the reaction CMP + ATP = CDP + ADP. The enzyme catalyses dCMP + ATP = dCDP + ADP. The polypeptide is Cytidylate kinase (Burkholderia vietnamiensis (strain G4 / LMG 22486) (Burkholderia cepacia (strain R1808))).